Reading from the N-terminus, the 264-residue chain is Myozenin-2 (264 aa).

At Arg53 the chain carries Omega-N-methylarginine. Residues 90-135 (GRVDGSNLEGGSQQGPSTPPNTPDPRSPPNPENIAPGYSGPLKEIP) form a disordered region. Ser101 is subject to Phosphoserine. Residues 106-120 (STPPNTPDPRSPPNP) are compositionally biased toward pro residues. 2 positions are modified to phosphothreonine: Thr107 and Thr111. Ser116 is subject to Phosphoserine.

It belongs to the myozenin family. As to quaternary structure, interacts via its C-terminus with spectrin repeats 3 and 4 of ACTN2. Interacts with ACTN1, LDB3, MYOT and PPP3CA. Expressed specifically in heart and skeletal muscle. In skeletal muscle, localized to the soleus and plantaris muscles, which are predominantly composed of slow-twitch fibers.

Its subcellular location is the cytoplasm. It localises to the myofibril. The protein resides in the sarcomere. It is found in the z line. Its function is as follows. Myozenins may serve as intracellular binding proteins involved in linking Z line proteins such as alpha-actinin, gamma-filamin, TCAP/telethonin, LDB3/ZASP and localizing calcineurin signaling to the sarcomere. Plays an important role in the modulation of calcineurin signaling. May play a role in myofibrillogenesis. The polypeptide is Myozenin-2 (Mus musculus (Mouse)).